We begin with the raw amino-acid sequence, 473 residues long: MAMAKLAIFTTLMAILVMTSQGRIPTEGGEKEAEADRITSLPGQPNVTFEQFSGYVTVDKLSGRSLFYWLTEASDLPLSKPLVIWLNGGPGCSSVAYGASEEIGPFRISKGGSGLYLNKFAWNSISNLLFLEAPAGVGFSYTNRSSDLFNTGDRRTAKDSLQFLIQWLHRFPRYNHREIYITGESYAGHYVPQLAKEIMNYNKRSKNPLNLKGIMVGNAVTDNHYDNLGTVSYWWSHAMISDRTYHQLISTCDFSRQKESDECETLYSYAMEQEFGNIDQYNIYAPPCNKSSDGGGSYNGSSGRRSMRLPHLPHSVLRKISGYDPCTERYAEIYYNRPDVQKALHANTTKIPYKWTACSEVLNRNWNDTDSTVLPIYREMIAGGIRVWVFSGDVDSVVPVTATRYSLARLSLSTKLPWYPWYVKKQVGGWTEVYEGLTFVTVRGAGHEVPLFKPRAAFELFKYFLRGKPLPKA.

Residues 1–22 (MAMAKLAIFTTLMAILVMTSQG) form the signal peptide. N-linked (GlcNAc...) asparagine glycans are attached at residues Asn46 and Asn143. Cystine bridges form between Cys92–Cys358, Cys252–Cys263, and Cys288–Cys326. Ser185 is an active-site residue. 4 N-linked (GlcNAc...) asparagine glycosylation sites follow: Asn289, Asn299, Asn347, and Asn367. Catalysis depends on residues Asp395 and His447.

The protein belongs to the peptidase S10 family. In terms of tissue distribution, ubiquitous.

It is found in the secreted. Probable carboxypeptidase. In Arabidopsis thaliana (Mouse-ear cress), this protein is Serine carboxypeptidase-like 25 (SCPL25).